Here is a 320-residue protein sequence, read N- to C-terminus: Major pollen allergen Pha a 5.1 (320 aa).

Positions 1–23 (MAVQKYTMALFLAVALVAGPAAP) are cleaved as a signal peptide. A disordered region spans residues 21-45 (AAPTPPTPRTPPLLPPPRARDKATL). Pro residues predominate over residues 22 to 37 (APTPPTPRTPPLLPPP).

This sequence belongs to the Poa p IX/Phl p VI allergen family.

This chain is Major pollen allergen Pha a 5.1, found in Phalaris aquatica (Canary grass).